The primary structure comprises 72 residues: Translation initiation factor IF-1 (72 aa).

One can recognise an S1-like domain in the interval 1–72; sequence MSKEDVIEMQ…TRGRITWRAK (72 aa).

It belongs to the IF-1 family. Component of the 30S ribosomal translation pre-initiation complex which assembles on the 30S ribosome in the order IF-2 and IF-3, IF-1 and N-formylmethionyl-tRNA(fMet); mRNA recruitment can occur at any time during PIC assembly.

The protein resides in the cytoplasm. Functionally, one of the essential components for the initiation of protein synthesis. Stabilizes the binding of IF-2 and IF-3 on the 30S subunit to which N-formylmethionyl-tRNA(fMet) subsequently binds. Helps modulate mRNA selection, yielding the 30S pre-initiation complex (PIC). Upon addition of the 50S ribosomal subunit IF-1, IF-2 and IF-3 are released leaving the mature 70S translation initiation complex. The protein is Translation initiation factor IF-1 of Clostridium acetobutylicum (strain ATCC 824 / DSM 792 / JCM 1419 / IAM 19013 / LMG 5710 / NBRC 13948 / NRRL B-527 / VKM B-1787 / 2291 / W).